We begin with the raw amino-acid sequence, 111 residues long: Putative carnobacteriocin-B2 immunity protein (111 aa).

Functionally, could impart immunity to carnobacteriocin-B2 to naturally sensitive host strains. This Carnobacterium maltaromaticum (Carnobacterium piscicola) protein is Putative carnobacteriocin-B2 immunity protein.